The sequence spans 413 residues: Multifunctional CCA protein (413 aa).

Gly8 and Arg11 together coordinate ATP. Residues Gly8 and Arg11 each contribute to the CTP site. 2 residues coordinate Mg(2+): Asp21 and Asp23. Positions 91, 143, and 146 each coordinate ATP. CTP-binding residues include Arg91, Arg143, and Arg146. In terms of domain architecture, HD spans 232–333 (TGVHVMMVVD…VRLFERSDAL (102 aa)).

The protein belongs to the tRNA nucleotidyltransferase/poly(A) polymerase family. Bacterial CCA-adding enzyme type 1 subfamily. In terms of assembly, monomer. Can also form homodimers and oligomers. It depends on Mg(2+) as a cofactor. Requires Ni(2+) as cofactor.

The catalysed reaction is a tRNA precursor + 2 CTP + ATP = a tRNA with a 3' CCA end + 3 diphosphate. It carries out the reaction a tRNA with a 3' CCA end + 2 CTP + ATP = a tRNA with a 3' CCACCA end + 3 diphosphate. In terms of biological role, catalyzes the addition and repair of the essential 3'-terminal CCA sequence in tRNAs without using a nucleic acid template. Adds these three nucleotides in the order of C, C, and A to the tRNA nucleotide-73, using CTP and ATP as substrates and producing inorganic pyrophosphate. tRNA 3'-terminal CCA addition is required both for tRNA processing and repair. Also involved in tRNA surveillance by mediating tandem CCA addition to generate a CCACCA at the 3' terminus of unstable tRNAs. While stable tRNAs receive only 3'-terminal CCA, unstable tRNAs are marked with CCACCA and rapidly degraded. This Burkholderia cenocepacia (strain ATCC BAA-245 / DSM 16553 / LMG 16656 / NCTC 13227 / J2315 / CF5610) (Burkholderia cepacia (strain J2315)) protein is Multifunctional CCA protein.